A 303-amino-acid polypeptide reads, in one-letter code: Bifunctional protein FolD (303 aa).

NADP(+) contacts are provided by residues 175–177 and isoleucine 243; that span reads GVS.

Belongs to the tetrahydrofolate dehydrogenase/cyclohydrolase family. In terms of assembly, homodimer.

The enzyme catalyses (6R)-5,10-methylene-5,6,7,8-tetrahydrofolate + NADP(+) = (6R)-5,10-methenyltetrahydrofolate + NADPH. The catalysed reaction is (6R)-5,10-methenyltetrahydrofolate + H2O = (6R)-10-formyltetrahydrofolate + H(+). It functions in the pathway one-carbon metabolism; tetrahydrofolate interconversion. Functionally, catalyzes the oxidation of 5,10-methylenetetrahydrofolate to 5,10-methenyltetrahydrofolate and then the hydrolysis of 5,10-methenyltetrahydrofolate to 10-formyltetrahydrofolate. The sequence is that of Bifunctional protein FolD from Xanthomonas euvesicatoria pv. vesicatoria (strain 85-10) (Xanthomonas campestris pv. vesicatoria).